Here is a 345-residue protein sequence, read N- to C-terminus: Lysine-specific demethylase JMJ32 (345 aa).

Residues Gly122–Gln315 enclose the JmjC domain. His174, Asp176, and His281 together coordinate Fe cation.

Belongs to the JARID1 histone demethylase family. It depends on Fe(2+) as a cofactor. In terms of tissue distribution, expressed ubiquitously including in vasculatures, leaves, siliques, roots and inflorescences. Present in the root meristem. Accumulates in cotyledons and root tips of young seedlings.

It is found in the nucleus. It localises to the cytoplasm. The protein resides in the endoplasmic reticulum. It carries out the reaction N(6),N(6),N(6)-trimethyl-L-lysyl(27)-[histone H3] + 2-oxoglutarate + O2 = N(6),N(6)-dimethyl-L-lysyl(27)-[histone H3] + formaldehyde + succinate + CO2. It catalyses the reaction N(6),N(6)-dimethyl-L-lysyl(27)-[histone H3] + 2-oxoglutarate + O2 = N(6)-methyl-L-lysyl(27)-[histone H3] + formaldehyde + succinate + CO2. The enzyme catalyses N(6),N(6),N(6)-trimethyl-L-lysyl(27)-[histone H3] + 2 2-oxoglutarate + 2 O2 = N(6)-methyl-L-lysyl(27)-[histone H3] + 2 formaldehyde + 2 succinate + 2 CO2. In terms of biological role, histone demethylase that demethylates 'Lys-27' (H3K27me) of histone H3 with a specific activity for H3K27me3 and H3K27me2, and involved in the regulation of gene expression. No activity on H3K27me1. Together with JMJ30, regulates the flowering-repressor FLOWERING LOCUS C (FLC) locus by removing the repressive histone modification H3 lysine 27 trimethylation (H3K27me3), especially at elevated temperatures (e.g. 29 degrees Celsius), thus preventing extreme precocious flowering. JMJ30 and JMJ32 are regulators involved in the integration of abscisic acid (ABA) and brassinosteroids (BR) signaling pathways. Together with JMJ30, controls ABA-mediated growth arrest during the post-germination stage in unfavorable conditions, and responses to ABA during root development, via the removal of repressive histone mark (H3K27me3) from the SnRK2.8 promoter, thus promoting SnRK2.8 expression and subsequent kinase-dependent ABI3 activation. In addition, removes the repressive histone marks (H3K27me3) from the BZR1 locus in response to stress and ABA, thus activating the BR signaling pathway which, in turn, inhibits the ABA signaling pathway. The polypeptide is Lysine-specific demethylase JMJ32 (Arabidopsis thaliana (Mouse-ear cress)).